The primary structure comprises 93 residues: Small ribosomal subunit protein uS19 (93 aa).

The interval 73–93 (EFSPTRTYRGHNKKDKKIQKK) is disordered. The segment covering 80–93 (YRGHNKKDKKIQKK) has biased composition (basic residues).

Belongs to the universal ribosomal protein uS19 family.

In terms of biological role, protein S19 forms a complex with S13 that binds strongly to the 16S ribosomal RNA. The polypeptide is Small ribosomal subunit protein uS19 (rpsS) (Aster yellows phytoplasma).